A 236-amino-acid chain; its full sequence is 6-carboxyhexanoate--CoA ligase (236 aa).

It belongs to the BioW family. As to quaternary structure, homodimer. The cofactor is Mg(2+).

It carries out the reaction heptanedioate + ATP + CoA = 6-carboxyhexanoyl-CoA + AMP + diphosphate. It participates in metabolic intermediate metabolism; pimeloyl-CoA biosynthesis; pimeloyl-CoA from pimelate: step 1/1. Catalyzes the transformation of pimelate into pimeloyl-CoA with concomitant hydrolysis of ATP to AMP. The protein is 6-carboxyhexanoate--CoA ligase of Methanococcus aeolicus (strain ATCC BAA-1280 / DSM 17508 / OCM 812 / Nankai-3).